Here is a 122-residue protein sequence, read N- to C-terminus: Large ribosomal subunit protein bL12 (122 aa).

Belongs to the bacterial ribosomal protein bL12 family. Homodimer. Part of the ribosomal stalk of the 50S ribosomal subunit. Forms a multimeric L10(L12)X complex, where L10 forms an elongated spine to which 2 to 4 L12 dimers bind in a sequential fashion. Binds GTP-bound translation factors.

In terms of biological role, forms part of the ribosomal stalk which helps the ribosome interact with GTP-bound translation factors. Is thus essential for accurate translation. The chain is Large ribosomal subunit protein bL12 from Staphylococcus aureus (strain Newman).